The primary structure comprises 55 residues: uncharacterized protein (55 aa).

This is an uncharacterized protein from Acidianus hospitalis (AFV-1).